Reading from the N-terminus, the 264-residue chain is uncharacterized protein (264 aa).

An ATP-binding site is contributed by 8-15; that stretch reads IQGGTGKT.

This is an uncharacterized protein from Methanocaldococcus jannaschii (strain ATCC 43067 / DSM 2661 / JAL-1 / JCM 10045 / NBRC 100440) (Methanococcus jannaschii).